Consider the following 2192-residue polypeptide: Non-reducing polyketide synthase 1 (2192 aa).

The N-terminal acylcarrier protein transacylase domain (SAT) stretch occupies residues 5–243; it reads LLLGDQTADQ…VSIPIYAPYH (239 aa). Positions 374–806 constitute a Ketosynthase family 3 (KS3) domain; that stretch reads NDKIAIVGMS…GGNTSLLLED (433 aa). Residues Cys-546, His-681, and His-724 each act as for beta-ketoacyl synthase activity in the active site. Residues 905-1218 are malonyl-CoA:ACP transacylase (MAT) domain; that stretch reads FCFTGQGSQY…ANSMCALFLA (314 aa). Ser-993 functions as the For acyl/malonyl transferase activity in the catalytic mechanism. The interval 1293-1610 is product template (PT) domain; the sequence is SCQKIIDEEF…RKVLNTFLPP (318 aa). An N-terminal hotdog fold region spans residues 1295-1430; sequence QKIIDEEFSA…CTVKFEDINT (136 aa). Residues 1295–1605 enclose the PKS/mFAS DH domain; that stretch reads QKIIDEEFSA…FQKIPRKVLN (311 aa). Residue His-1327 is the Proton acceptor; for dehydratase activity of the active site. The interval 1458–1605 is C-terminal hotdog fold; sequence AHVIGRGLAY…FQKIPRKVLN (148 aa). The Proton donor; for dehydratase activity role is filled by Asp-1518. The disordered stretch occupies residues 1639-1668; that stretch reads TQAQPAKAVPKQVTVAAPTPKAAPKKADLK. The Carrier 1 domain maps to 1670–1747; sequence PAGPTIITRV…EMKKFFSQYD (78 aa). Ser-1707 is modified (O-(pantetheine 4'-phosphoryl)serine). The segment at 1748–1788 is disordered; it reads GEVGTPEQDDSDSDSETSGDASTPMSEVGTPMTIPSSAVSE. Acidic residues predominate over residues 1754–1764; it reads EQDDSDSDSET. One can recognise a Carrier 2 domain in the interval 1798–1875; the sequence is APASGEVSIA…DVENALDMRP (78 aa). Ser-1835 is subject to O-(pantetheine 4'-phosphoryl)serine. Residues 1913–2164 are thioesterase (TE) domain; the sequence is SKYPAATSVL…SMMKPPHVSI (252 aa).

In terms of biological role, non-reducing polyketide synthase; part of the gene cluster that mediates the biosynthesis of elsinochromes, pigments consisting of at least four interconvertible tautomers (A, B, C and D) that have a core phenolic quinone to which various side chains are attached and which play an important role in fungal pathogenesis. The non-reducing polyketide synthase PKS1 was proposed to iteratively catalyze decarboxylation between acetyl-CoA and malonyl-CoA subunits for polyketide chain elongation. The released polyketide undergoes cyclization to form an aromatic ring, and proceeds via serial modification steps to produce the heptaketide back- bone of elsinochrome. As elsinochrome has a symmetrical structure, two identical heptaketides are fused to form a core 1,2-dihydrobenzo-perylene ring structure, which can then be successively modified to produce the various derivatives of elsinochrome. Some of these reactions may be cooperatively carried out, at least in part, by the products of RDT1, OXR1 and PKS1. PRF1, embedded within the elsinochrome cluster possibly functions to stabilize some of the biosynthetic enzymes required for elsinochrome production. As prefoldin is a hexamer containing 2 a and 4 b subunits, additional prefoldin subunits, whose coding genes may not immediately link to the elsinochrome biosynthetic gene cluster, are required to fulfill the chaperone function. In addition, no methyltransferase-coding gene exists within the biosynthetic gene cluster, even though elsinochrome has four methyl groups at positions C3, C7, C8 and C12. Apparently, the identified gene cluster does not contain the entire entourage of genes responsible for elsinochrome biosynthesis. Once elsinochrome is synthesized, it must be exported outside the fungal cells, which is probably accomplished by the ECT1 transporter, to avoid toxicity. The polypeptide is Non-reducing polyketide synthase 1 (Elsinoe fawcettii (Citrus scab fungus)).